The chain runs to 274 residues: Large ribosomal subunit protein uL2 (274 aa).

The interval 223-256 is disordered; sequence VVMNPVDHPHGGGEGKTGEGRHPVDPWGNLTKGY. The segment covering 229–246 has biased composition (basic and acidic residues); that stretch reads DHPHGGGEGKTGEGRHPV.

Belongs to the universal ribosomal protein uL2 family. Part of the 50S ribosomal subunit. Forms a bridge to the 30S subunit in the 70S ribosome.

One of the primary rRNA binding proteins. Required for association of the 30S and 50S subunits to form the 70S ribosome, for tRNA binding and peptide bond formation. It has been suggested to have peptidyltransferase activity; this is somewhat controversial. Makes several contacts with the 16S rRNA in the 70S ribosome. The polypeptide is Large ribosomal subunit protein uL2 (Variovorax paradoxus (strain S110)).